We begin with the raw amino-acid sequence, 140 residues long: Ribosome maturation factor RimP (140 aa).

Belongs to the RimP family.

The protein localises to the cytoplasm. Required for maturation of 30S ribosomal subunits. This chain is Ribosome maturation factor RimP, found in Campylobacter fetus subsp. fetus (strain 82-40).